Reading from the N-terminus, the 463-residue chain is tRNA (guanine(10)-N(2))-methyltransferase TRMT11 (463 aa).

Position 2 is an N-acetylalanine (alanine 2).

It belongs to the class I-like SAM-binding methyltransferase superfamily. TRM11 methyltransferase family. In terms of assembly, part of the heterodimeric TRMT11-TRM112 methyltransferase complex; this complex forms an active tRNA methyltransferase, where TRMT112 acts as an activator of the catalytic subunit TRMT11.

Its subcellular location is the cytoplasm. It carries out the reaction guanosine(10) in tRNA + S-adenosyl-L-methionine = N(2)-methylguanosine(10) in tRNA + S-adenosyl-L-homocysteine + H(+). Catalytic subunit of the TRMT11-TRM112 methyltransferase complex, that specifically mediates the S-adenosyl-L-methionine-dependent N(2)-methylation of guanosine nucleotide at position 10 (m2G10) in tRNAs. This is one of the major tRNA (guanine-N(2))-methyltransferases. In Pongo abelii (Sumatran orangutan), this protein is tRNA (guanine(10)-N(2))-methyltransferase TRMT11.